The chain runs to 84 residues: Exodeoxyribonuclease 7 small subunit (84 aa).

The protein belongs to the XseB family. As to quaternary structure, heterooligomer composed of large and small subunits.

It localises to the cytoplasm. It catalyses the reaction Exonucleolytic cleavage in either 5'- to 3'- or 3'- to 5'-direction to yield nucleoside 5'-phosphates.. Bidirectionally degrades single-stranded DNA into large acid-insoluble oligonucleotides, which are then degraded further into small acid-soluble oligonucleotides. This is Exodeoxyribonuclease 7 small subunit from Haemophilus influenzae (strain 86-028NP).